The following is a 587-amino-acid chain: Prolycopene isomerase 1, chloroplastic (587 aa).

Residues M1–P13 are compositionally biased toward low complexity. The segment at M1 to S21 is disordered. The N-terminal 50 residues, M1–V50, are a transit peptide targeting the chloroplast.

The protein belongs to the carotenoid/retinoid oxidoreductase family. CrtISO subfamily. Requires NAD(+) as cofactor. NADP(+) is required as a cofactor. The cofactor is FAD. Up-regulated in the flower buds and flower lip tissue, while it is weakly expressed in leaves.

Its subcellular location is the plastid. The protein resides in the chloroplast membrane. The catalysed reaction is 7,7',9,9'-tetra-cis-lycopene = all-trans-lycopene. The protein operates within carotenoid biosynthesis; lycopene biosynthesis. Functionally, carotene cis-trans-isomerase that converts 7,9,9'-tri-cis-neurosporene to 9'-cis-neurosporene and 7,9,9',7'-tetra-cis-lycopene (also known as prolycopene) into all-trans-lycopene. Isomerization requires redox-active components, suggesting that isomerization is achieved by a reversible redox reaction acting at specific double bonds. Isomerizes adjacent cis-double bonds at C7 and C9 pairwise into the trans-configuration, but is incapable of isomerizing single cis-double bonds at C9 and C9'. This chain is Prolycopene isomerase 1, chloroplastic (CRTISO1), found in Oncidium hybrid cultivar (Orchid).